Consider the following 651-residue polypeptide: Transcription factor E2-alpha (651 aa).

Disordered stretches follow at residues alanine 32 to asparagine 107, leucine 131 to serine 208, and aspartate 341 to proline 378. Composition is skewed to low complexity over residues serine 56 to serine 73, leucine 131 to serine 148, and aspartate 341 to proline 354. Residues serine 135 and serine 140 each carry the phosphoserine modification. Residue threonine 353 is modified to Phosphothreonine. Serine 357 bears the Phosphoserine mark. Arginine 369 is modified (omega-N-methylarginine). Serine 377 is subject to Phosphoserine. A leucine-zipper region spans residues leucine 387–leucine 422. The disordered stretch occupies residues histidine 457–valine 549. A compositionally biased stretch (low complexity) spans serine 461–serine 479. A Glycyl lysine isopeptide (Lys-Gly) (interchain with G-Cter in SUMO2) cross-link involves residue lysine 496. The residue at position 526 (serine 526) is a Phosphoserine. Aspartate 528 is subject to Phosphothreonine. At aspartate 533 the chain carries Phosphoserine. The span at glutamine 539 to valine 549 shows a compositional bias: basic and acidic residues. Residues glutamate 546–leucine 599 form the bHLH domain. A Glycyl lysine isopeptide (Lys-Gly) (interchain with G-Cter in SUMO2) cross-link involves residue lysine 622.

As to quaternary structure, homodimer. Heterodimer; efficient DNA binding requires dimerization with another bHLH protein. Forms a heterodimer with TWIST1 and TWIST2. Forms a heterodimer with NEUROD1; the heterodimer is inhibited in presence of ID2, but not NR0B2, to E-box element. Forms a heterodimer with TCF15; the heterodimer binds E-box element. Forms a heterodimer with MYOG; heterodimerization enhances MYOG DNA-binding and transcriptional activities. Forms a heterodimer with ATOH8; repress transcription of TCF3 and TCF3-NEUROG3 dimer-induced transactivation of E box-dependent promoters. Component of a nuclear TAL-1 complex composed at least of CBFA2T3, LDB1, TAL1 and TCF3. Interacts with NEUROD2. Interacts with EP300. Interacts with PTF1A, TGFB1I1 and UBE2I. Interacts with BHLHA9. Interacts with ASB2; the interaction is mediated by SKP2 and targets TCF3 for Notch-induced proteasomal degradation. Interacts with transcription factor ASCL5/AmeloD. Forms a heterodimer with ATOH7; required for ATOH7 DNA-binding. In terms of assembly, interacts with RALGAPA1. Interacts with FIGLA. Phosphorylated following NGF stimulation. In terms of processing, undergoes Notch-induced ubiquitination and subsequent proteasomal degradation which is mediated by ASB1 or ASB2, the substrate-recognition components of probable ECS E3 ubiquitin-protein ligase complexes.

The protein resides in the nucleus. Transcriptional regulator involved in the initiation of neuronal differentiation and mesenchymal to epithelial transition. Heterodimers between TCF3 and tissue-specific basic helix-loop-helix (bHLH) proteins play major roles in determining tissue-specific cell fate during embryogenesis, like muscle or early B-cell differentiation. Together with TCF15, required for the mesenchymal to epithelial transition. Dimers bind DNA on E-box motifs: 5'-CANNTG-3'. Binds to the kappa-E2 site in the kappa immunoglobulin gene enhancer. Binds to IEB1 and IEB2, which are short DNA sequences in the insulin gene transcription control region. Functionally, facilitates ATOH7 binding to DNA at the consensus sequence 5'-CAGGTG-3', and positively regulates transcriptional activity. This Mus musculus (Mouse) protein is Transcription factor E2-alpha (Tcf3).